The following is a 98-amino-acid chain: NADH-ubiquinone oxidoreductase chain 4L (98 aa).

A run of 3 helical transmembrane segments spans residues 1 to 21, 30 to 50, and 61 to 81; these read MSLT…GLLM, LLCL…TILI, and IILL…LVAV.

The protein belongs to the complex I subunit 4L family. In terms of assembly, core subunit of respiratory chain NADH dehydrogenase (Complex I) which is composed of 45 different subunits.

It is found in the mitochondrion inner membrane. It catalyses the reaction a ubiquinone + NADH + 5 H(+)(in) = a ubiquinol + NAD(+) + 4 H(+)(out). Core subunit of the mitochondrial membrane respiratory chain NADH dehydrogenase (Complex I) which catalyzes electron transfer from NADH through the respiratory chain, using ubiquinone as an electron acceptor. Part of the enzyme membrane arm which is embedded in the lipid bilayer and involved in proton translocation. The chain is NADH-ubiquinone oxidoreductase chain 4L (MT-ND4L) from Pipistrellus abramus (Japanese pipistrelle).